The sequence spans 172 residues: Endoribonuclease YbeY (172 aa).

Zn(2+)-binding residues include H124, H128, and H134.

The protein belongs to the endoribonuclease YbeY family. Zn(2+) is required as a cofactor.

It is found in the cytoplasm. Single strand-specific metallo-endoribonuclease involved in late-stage 70S ribosome quality control and in maturation of the 3' terminus of the 16S rRNA. This chain is Endoribonuclease YbeY, found in Rhodopseudomonas palustris (strain BisA53).